The sequence spans 198 residues: GTP-binding protein RHO1 (198 aa).

Residue 16–23 (GDGACGKT) participates in GTP binding. Residues 38–46 (YVPTVFENY) carry the Effector region motif. GTP is bound by residues 63-67 (DTAGQ) and 121-124 (CKSD). Cys195 bears the Cysteine methyl ester mark. A lipid anchor (S-geranylgeranyl cysteine) is attached at Cys195. Residues 196 to 198 (VVL) constitute a propeptide, removed in mature form.

This sequence belongs to the small GTPase superfamily. Rho family.

It localises to the cell membrane. This Candida albicans (strain SC5314 / ATCC MYA-2876) (Yeast) protein is GTP-binding protein RHO1 (RHO1).